Reading from the N-terminus, the 218-residue chain is Holliday junction branch migration complex subunit RuvA (218 aa).

The tract at residues 1 to 64 (MIGKITGRLE…EDVMQLFGFT (64 aa)) is domain I. A domain II region spans residues 65-143 (TLTEKEWHRL…SVMGMSDTQA (79 aa)). Residues 144–164 (TVAAQSSDAVIETRAAPSPVV) are flexible linker. The tract at residues 165–218 (QNPSAQAEALSALSNLGYAPGDAAAAVAQAAGELPDAETPDLIRAALKRLAPKG) is domain III.

Belongs to the RuvA family. Homotetramer. Forms an RuvA(8)-RuvB(12)-Holliday junction (HJ) complex. HJ DNA is sandwiched between 2 RuvA tetramers; dsDNA enters through RuvA and exits via RuvB. An RuvB hexamer assembles on each DNA strand where it exits the tetramer. Each RuvB hexamer is contacted by two RuvA subunits (via domain III) on 2 adjacent RuvB subunits; this complex drives branch migration. In the full resolvosome a probable DNA-RuvA(4)-RuvB(12)-RuvC(2) complex forms which resolves the HJ.

The protein resides in the cytoplasm. The RuvA-RuvB-RuvC complex processes Holliday junction (HJ) DNA during genetic recombination and DNA repair, while the RuvA-RuvB complex plays an important role in the rescue of blocked DNA replication forks via replication fork reversal (RFR). RuvA specifically binds to HJ cruciform DNA, conferring on it an open structure. The RuvB hexamer acts as an ATP-dependent pump, pulling dsDNA into and through the RuvAB complex. HJ branch migration allows RuvC to scan DNA until it finds its consensus sequence, where it cleaves and resolves the cruciform DNA. This chain is Holliday junction branch migration complex subunit RuvA, found in Roseobacter denitrificans (strain ATCC 33942 / OCh 114) (Erythrobacter sp. (strain OCh 114)).